The primary structure comprises 327 residues: Interleukin-12 subunit beta (327 aa).

The N-terminal stretch at 1–22 (MHPQQLVVSWFSLVLLTSPIVA) is a signal peptide. An Ig-like C2-type domain is found at 23-106 (IWELEKNVYV…LSRSLLLLHK (84 aa)). Cysteine 50 and cysteine 90 are disulfide-bonded. The N-linked (GlcNAc...) asparagine glycan is linked to asparagine 223. One can recognise a Fibronectin type-III domain in the interval 238-327 (PPKNLQLRPL…WSEWASVSCS (90 aa)).

Belongs to the IL-12B family. Heterodimer with IL12A; disulfide-linked. The heterodimer is known as interleukin IL-12. Heterodimer with IL23A; disulfide-linked. The heterodimer is known as interleukin IL-23. Also secreted as a monomer. Interacts with NBR1; this interaction promotes IL-12 secretion.

It is found in the secreted. Its function is as follows. Cytokine that can act as a growth factor for activated T and NK cells, enhance the lytic activity of NK/lymphokine-activated killer cells, and stimulate the production of IFN-gamma by resting PBMC. Associates with IL23A to form the IL-23 interleukin, a heterodimeric cytokine which functions in innate and adaptive immunity. IL-23 may constitute with IL-17 an acute response to infection in peripheral tissues. IL-23 binds to a heterodimeric receptor complex composed of IL12RB1 and IL23R, activates the Jak-Stat signaling cascade, stimulates memory rather than naive T-cells and promotes production of pro-inflammatory cytokines. IL-23 induces autoimmune inflammation and thus may be responsible for autoimmune inflammatory diseases and may be important for tumorigenesis. The sequence is that of Interleukin-12 subunit beta (IL12B) from Cervus elaphus (Red deer).